We begin with the raw amino-acid sequence, 1342 residues long: DNA-directed RNA polymerase subunit beta (1342 aa).

This sequence belongs to the RNA polymerase beta chain family. In terms of assembly, the RNAP catalytic core consists of 2 alpha, 1 beta, 1 beta' and 1 omega subunit. When a sigma factor is associated with the core the holoenzyme is formed, which can initiate transcription.

It carries out the reaction RNA(n) + a ribonucleoside 5'-triphosphate = RNA(n+1) + diphosphate. DNA-dependent RNA polymerase catalyzes the transcription of DNA into RNA using the four ribonucleoside triphosphates as substrates. This chain is DNA-directed RNA polymerase subunit beta, found in Colwellia psychrerythraea (strain 34H / ATCC BAA-681) (Vibrio psychroerythus).